A 295-amino-acid chain; its full sequence is MTKILGSDPVKRGMAQMQKGGVIMDVVNAEQARIAEAAGAVAVMALERVPSDIRAAGGVARMANTTIVREVMEAVSIPVMAKARIGHIVEARVLEAMGVDYIDESEVLTPADEEFHLLKSDYTVPFVCGCRDLGEALRRIGEGASMLRTKGEPGTGNVVEAVRHLRKVNAQLRKVINMSHDELMTEAKYLGAPFELLLQIKTLGKLPVVNFAAGGIATPADAALMMELGADGVFVGSGIFKSENPEKFAKAIVQATTHYQDYDLIARLSADLGEPMRGVEISELAVQDRMQERGW.

Asp25 provides a ligand contact to D-ribose 5-phosphate. The active-site Schiff-base intermediate with D-ribose 5-phosphate is Lys82. Gly154 serves as a coordination point for D-ribose 5-phosphate. A D-glyceraldehyde 3-phosphate-binding site is contributed by Arg166. D-ribose 5-phosphate is bound by residues Gly215 and 236–237 (GS).

This sequence belongs to the PdxS/SNZ family. As to quaternary structure, in the presence of PdxT, forms a dodecamer of heterodimers.

It carries out the reaction aldehydo-D-ribose 5-phosphate + D-glyceraldehyde 3-phosphate + L-glutamine = pyridoxal 5'-phosphate + L-glutamate + phosphate + 3 H2O + H(+). The protein operates within cofactor biosynthesis; pyridoxal 5'-phosphate biosynthesis. Its function is as follows. Catalyzes the formation of pyridoxal 5'-phosphate from ribose 5-phosphate (RBP), glyceraldehyde 3-phosphate (G3P) and ammonia. The ammonia is provided by the PdxT subunit. Can also use ribulose 5-phosphate and dihydroxyacetone phosphate as substrates, resulting from enzyme-catalyzed isomerization of RBP and G3P, respectively. This is Pyridoxal 5'-phosphate synthase subunit PdxS from Actinobacillus pleuropneumoniae serotype 7 (strain AP76).